A 780-amino-acid chain; its full sequence is ATP-dependent 6-phosphofructokinase, muscle type (780 aa).

At Thr2 the chain carries N-acetylthreonine. The N-terminal catalytic PFK domain 1 stretch occupies residues 2–390; that stretch reads THEEHHAAKT…NWEVYKLLAH (389 aa). ATP contacts are provided by residues Gly25, 88 to 89, and 118 to 121; these read RC and GDGS. Residue Asp119 participates in Mg(2+) binding. Position 133 is a phosphoserine (Ser133). Residues 164–166, Arg201, 208–210, Glu264, Arg292, and 298–301 each bind substrate; these read SID, MGR, and HVQR. Asp166 functions as the Proton acceptor in the catalytic mechanism. Ser377 bears the Phosphoserine mark. The segment at 391-401 is interdomain linker; it reads VRPPVSKGGLH. The tract at residues 402 to 780 is C-terminal regulatory PFK domain 2; that stretch reads TVAVMNVGAP…SRKRSGEAAV (379 aa). Residues Arg471 and 528–532 each bind beta-D-fructose 2,6-bisphosphate; that span reads TVSNN. Ser530 carries an O-linked (GlcNAc) serine glycan. At Lys557 the chain carries N6-(2-hydroxyisobutyryl)lysine. Residues Arg566, 573–575, Glu629, Arg655, and 661–664 contribute to the beta-D-fructose 2,6-bisphosphate site; these read MGG and HMQQ. Ser667 carries the post-translational modification Phosphoserine. Arg735 is a binding site for beta-D-fructose 2,6-bisphosphate. Ser775 is subject to Phosphoserine.

It belongs to the phosphofructokinase type A (PFKA) family. ATP-dependent PFK group I subfamily. Eukaryotic two domain clade 'E' sub-subfamily. Homo- and heterotetramers. Phosphofructokinase (PFK) enzyme functions as a tetramer composed of different combinations of 3 types of subunits, called PFKM (M), PFKL (L) and PFKP (P). The composition of the PFK tetramer differs according to the tissue type it is present in. The kinetic and regulatory properties of the tetrameric enzyme are dependent on the subunit composition, hence can vary across tissues. Isoform 2 and isoform 3 interact (via N-terminal testis-specific region) with GSTM5. Isoform 2 and isoform 3 interact (via C-terminus) with HK1 (via N-terminal spermatogenic cell-specific region). The cofactor is Mg(2+). Post-translationally, glcNAcylation decreases enzyme activity. As to expression, isoform 1 is expressed in skeletal muscle (at protein level). Isoform 2 and isoform 3 are testis-specific and are detected in quiescent sperm (at protein level). They are first detected in the cytoplasm of round spermatids and subsequently in the flagellum of elongated spermatids extending into the seminiferous tubule lumen (at protein level). Isoform 2 is expressed at higher level than isoform 3 in testis.

It is found in the cytoplasm. The protein resides in the cell projection. Its subcellular location is the cilium. The protein localises to the flagellum. It catalyses the reaction beta-D-fructose 6-phosphate + ATP = beta-D-fructose 1,6-bisphosphate + ADP + H(+). Its pathway is carbohydrate degradation; glycolysis; D-glyceraldehyde 3-phosphate and glycerone phosphate from D-glucose: step 3/4. Its activity is regulated as follows. Allosterically activated by ADP, AMP, or fructose 2,6-bisphosphate, and allosterically inhibited by ATP or citrate. Its function is as follows. Catalyzes the phosphorylation of D-fructose 6-phosphate to fructose 1,6-bisphosphate by ATP, the first committing step of glycolysis. In Mus musculus (Mouse), this protein is ATP-dependent 6-phosphofructokinase, muscle type (Pfkm).